We begin with the raw amino-acid sequence, 509 residues long: Major envelope glycoprotein (509 aa).

The first 17 residues, 1-17, serve as a signal peptide directing secretion; that stretch reads MVRTAVLILLLVRFSEP. Residues N34, N156, N194, N351, N381, and N423 are each glycosylated (N-linked (GlcNAc...) asparagine; by host). S479 carries the O-palmitoyl serine; by host lipid modification. A helical membrane pass occupies residues 480 to 502; the sequence is FMLGHAFSFMLTVGVIIFLFCMV. An N-linked (GlcNAc...) asparagine; by host glycan is attached at N504.

The protein belongs to the baculoviridae gp64 family. In terms of processing, palmitoylated.

It localises to the virion membrane. It is found in the host cell membrane. In terms of biological role, envelope phosphoglycoprotein which mediates the fusion of viral and host endosomal membranes leading to virus entry into the host cell. This chain is Major envelope glycoprotein (GP67), found in Choristoneura fumiferana nuclear polyhedrosis virus (CfMNPV).